We begin with the raw amino-acid sequence, 496 residues long: MSTEHMEELNDQQIVRREKMAALREQGIDPFGKRFERTANSQELKDKYANLDKEQLHDKNETATIAGRLITKRGKGKVGFAHLQDREGQIQIYVRKDAVGEENYEIFKKADLGDFLGVEGEVMRTDMGELSIKATHITHLSKALRPLPEKFHGLTDVETIYRKRYLDLISNRESFERFVTRSKIISEIRRYLDQKGFLEVETPVLHNEAGGAAARPFITHHNAQNIDMVLRIATELHLKRLIVGGMERVYEIGRIFRNEGMDATHNPEFTSIEVYQAYADFQDIMDLTEGIIQHAAKSVKGDGPVNYQGTEIKINEPFKRVHMVDAIREITGVDFWQDMTLEEAKAIAAEKKVPVEKHYTEVGHIINAFFEEFVEETLIQPTFVYGHPVAVSPLAKKNPEDQRFTDRFELFIMTKEYGNAFTELNDPIDQLSRFEAQAKAKELGDDEATGIDYDYIEALEYGMPPTGGLGIGIDRLCMLLTDTTTIRDVLLFPTMK.

Mg(2+)-binding residues include Glu-409 and Glu-416.

This sequence belongs to the class-II aminoacyl-tRNA synthetase family. In terms of assembly, homodimer. Requires Mg(2+) as cofactor.

The protein localises to the cytoplasm. The enzyme catalyses tRNA(Lys) + L-lysine + ATP = L-lysyl-tRNA(Lys) + AMP + diphosphate. This is Lysine--tRNA ligase from Streptococcus pneumoniae serotype 4 (strain ATCC BAA-334 / TIGR4).